A 115-amino-acid chain; its full sequence is Mediator of RNA polymerase II transcription subunit 11 (115 aa).

A coiled-coil region spans residues 56–107 (YERLDKSTTQLRKEIQLLDENVGTRLLPINVNKKALGQDTEKMEEQLDLLSA).

Belongs to the mediator complex subunit 11 family. In terms of assembly, component of the Mediator complex, which is composed of at least 21 subunits that form three structurally distinct submodules. The Mediator head module contains MED6, MED8, MED11, SRB4/MED17, SRB5/MED18, ROX3/MED19, SRB2/MED20 and SRB6/MED22, the middle module contains MED1, MED4, NUT1/MED5, MED7, CSE2/MED9, NUT2/MED10, SRB7/MED21 and SOH1/MED31, and the tail module contains MED2, PGD1/MED3, RGR1/MED14, GAL11/MED15 and SIN4/MED16. The head and the middle modules interact directly with RNA polymerase II, whereas the elongated tail module interacts with gene-specific regulatory proteins. MED11 forms a heterodimer with SRB6/MED22. The MED11/22 heterodimer binds to and stabilizes the central head subunit SRB4/MED17. Interacts with TFIIH subunit RAD3.

It localises to the nucleus. Functionally, component of the Mediator complex, a coactivator involved in the regulated transcription of nearly all RNA polymerase II-dependent genes. Mediator functions as a bridge to convey information from gene-specific regulatory proteins to the basal RNA polymerase II transcription machinery. The Mediator complex, having a compact conformation in its free form, is recruited to promoters by direct interactions with regulatory proteins and serves for the assembly of a functional pre-initiation complex (PIC) with RNA polymerase II and the general transcription factors. The Mediator complex unfolds to an extended conformation and partially surrounds RNA polymerase II, specifically interacting with the unphosphorylated form of the C-terminal domain (CTD) of RNA polymerase II. The Mediator complex dissociates from the RNA polymerase II holoenzyme and stays at the promoter when transcriptional elongation begins. The essential MED11/22 heterodimer specifically functions in promoting stable PIC formation. The chain is Mediator of RNA polymerase II transcription subunit 11 (MED11) from Saccharomyces cerevisiae (strain ATCC 204508 / S288c) (Baker's yeast).